The following is a 185-amino-acid chain: Large ribosomal subunit protein uL5 (185 aa).

Belongs to the universal ribosomal protein uL5 family. Part of the 50S ribosomal subunit; part of the 5S rRNA/L5/L18/L25 subcomplex. Contacts the 5S rRNA and the P site tRNA. Forms a bridge to the 30S subunit in the 70S ribosome.

Functionally, this is one of the proteins that bind and probably mediate the attachment of the 5S RNA into the large ribosomal subunit, where it forms part of the central protuberance. In the 70S ribosome it contacts protein S13 of the 30S subunit (bridge B1b), connecting the 2 subunits; this bridge is implicated in subunit movement. Contacts the P site tRNA; the 5S rRNA and some of its associated proteins might help stabilize positioning of ribosome-bound tRNAs. The chain is Large ribosomal subunit protein uL5 from Bartonella tribocorum (strain CIP 105476 / IBS 506).